The following is a 349-amino-acid chain: Protein RecA (349 aa).

65–72 contacts ATP; it reads GPESSGKT.

The protein belongs to the RecA family.

The protein localises to the cytoplasm. Functionally, can catalyze the hydrolysis of ATP in the presence of single-stranded DNA, the ATP-dependent uptake of single-stranded DNA by duplex DNA, and the ATP-dependent hybridization of homologous single-stranded DNAs. It interacts with LexA causing its activation and leading to its autocatalytic cleavage. This Acinetobacter baumannii (strain AB307-0294) protein is Protein RecA.